A 504-amino-acid polypeptide reads, in one-letter code: Maturase K (504 aa).

This sequence belongs to the intron maturase 2 family. MatK subfamily.

It is found in the plastid. The protein resides in the chloroplast. In terms of biological role, usually encoded in the trnK tRNA gene intron. Probably assists in splicing its own and other chloroplast group II introns. The sequence is that of Maturase K from Fagus japonica (Japanese beech).